The chain runs to 159 residues: UPF0587 protein v1g245604 (159 aa).

Cys33, Cys36, Cys67, and Cys70 together coordinate Zn(2+).

The protein belongs to the UPF0587 family.

The protein is UPF0587 protein v1g245604 of Nematostella vectensis (Starlet sea anemone).